A 499-amino-acid chain; its full sequence is Inosine-5'-monophosphate dehydrogenase (499 aa).

CBS domains lie at 106-165 (IDRE…SDAV) and 169-225 (MTDE…GSAA). Residues aspartate 260 and 308–310 (GIG) contribute to the NAD(+) site. Residues glycine 310 and glycine 312 each coordinate K(+). Serine 313 contributes to the IMP binding site. Cysteine 315 is a K(+) binding site. Residue cysteine 315 is the Thioimidate intermediate of the active site. IMP contacts are provided by residues 348–350 (DGG), 371–372 (GS), and 395–399 (YRGMG). The active-site Proton acceptor is arginine 411. Residue glutamate 425 participates in IMP binding. Residues glutamate 479, glycine 480, and histidine 481 each coordinate K(+). The disordered stretch occupies residues 480-499 (GHPHDVMITDEAPNYSPQGE).

Belongs to the IMPDH/GMPR family. Homotetramer. Requires K(+) as cofactor.

It carries out the reaction IMP + NAD(+) + H2O = XMP + NADH + H(+). It functions in the pathway purine metabolism; XMP biosynthesis via de novo pathway; XMP from IMP: step 1/1. Mycophenolic acid (MPA) is a non-competitive inhibitor that prevents formation of the closed enzyme conformation by binding to the same site as the amobile flap. In contrast, mizoribine monophosphate (MZP) is a competitive inhibitor that induces the closed conformation. MPA is a potent inhibitor of mammalian IMPDHs but a poor inhibitor of the bacterial enzymes. MZP is a more potent inhibitor of bacterial IMPDH. Its function is as follows. Catalyzes the conversion of inosine 5'-phosphate (IMP) to xanthosine 5'-phosphate (XMP), the first committed and rate-limiting step in the de novo synthesis of guanine nucleotides, and therefore plays an important role in the regulation of cell growth. This Halobacterium salinarum (strain ATCC 700922 / JCM 11081 / NRC-1) (Halobacterium halobium) protein is Inosine-5'-monophosphate dehydrogenase.